Reading from the N-terminus, the 132-residue chain is Large ribosomal subunit protein uL14 (132 aa).

It belongs to the universal ribosomal protein uL14 family. As to quaternary structure, part of the 50S ribosomal subunit. Forms a cluster with proteins L3 and L24e, part of which may contact the 16S rRNA in 2 intersubunit bridges.

Its function is as follows. Binds to 23S rRNA. Forms part of two intersubunit bridges in the 70S ribosome. This chain is Large ribosomal subunit protein uL14, found in Methanothrix thermoacetophila (strain DSM 6194 / JCM 14653 / NBRC 101360 / PT) (Methanosaeta thermophila).